Consider the following 162-residue polypeptide: Deoxyuridine 5'-triphosphate nucleotidohydrolase (162 aa).

Serine 11 is subject to Phosphoserine. Residues 83-85 (RSG), 97-103 (GVIDEDY), glycine 108, arginine 151, and 156-157 (FG) contribute to the dUTP site.

The protein belongs to the dUTPase family. As to quaternary structure, homotrimer. It depends on Mg(2+) as a cofactor. In terms of processing, phosphorylated in vivo on Ser-11, a reaction that can be catalyzed in vitro by CDC2.

The protein localises to the nucleus. The catalysed reaction is dUTP + H2O = dUMP + diphosphate + H(+). Its pathway is pyrimidine metabolism; dUMP biosynthesis; dUMP from dCTP (dUTP route): step 2/2. Its function is as follows. Catalyzes the cleavage of 2'-deoxyuridine 5'-triphosphate (dUTP) into 2'-deoxyuridine 5'-monophosphate (dUMP) and inorganic pyrophosphate and through its action efficiently prevents uracil misincorporation into DNA and at the same time provides dUMP, the substrate for de novo thymidylate biosynthesis. Inhibits peroxisome proliferator-activated receptor (PPAR) activity by binding of its N-terminal to PPAR, preventing the latter's dimerization with retinoid X receptor. Essential for embryonic development. In Mus musculus (Mouse), this protein is Deoxyuridine 5'-triphosphate nucleotidohydrolase (Dut).